The chain runs to 145 residues: uncharacterized protein (145 aa).

Ser-67 is subject to Phosphoserine.

As to expression, expressed in retina and retinoblastoma.

This is an uncharacterized protein from Homo sapiens (Human).